The chain runs to 305 residues: uncharacterized protein (305 aa).

10 consecutive transmembrane segments (helical) span residues 4 to 24, 38 to 58, 67 to 87, 95 to 115, 125 to 145, 152 to 172, 183 to 203, 215 to 235, 250 to 270, and 272 to 292; these read LNIYIMLLGFSIFTGATFNLA, AWRFGLAAAVMLIILIFTEGI, AVSYIVLGIIGIFGFNALFFV, VNGALIMGLNPLLTAILARII, VLGIFFAFIGVLLVITQGSIE, ISGGDLIIFTGNVCWALYGVL, LSTTTYTMVIGAVSLIVVSLF, IGVWGAIAFMAFFTSVLGYLW, LFFNLVPVVTMIISFAVGTPI, and VFQVIGAVLVILGVLTASGVI. EamA domains are found at residues 15-140 and 164-290; these read IFTG…LVIT and VCWA…TASG.

The protein belongs to the EamA transporter family.

The protein localises to the cell membrane. This is an uncharacterized protein from Bacillus subtilis (strain 168).